A 178-amino-acid polypeptide reads, in one-letter code: ATP synthase subunit delta (178 aa).

This sequence belongs to the ATPase delta chain family. In terms of assembly, F-type ATPases have 2 components, F(1) - the catalytic core - and F(0) - the membrane proton channel. F(1) has five subunits: alpha(3), beta(3), gamma(1), delta(1), epsilon(1). F(0) has three main subunits: a(1), b(2) and c(10-14). The alpha and beta chains form an alternating ring which encloses part of the gamma chain. F(1) is attached to F(0) by a central stalk formed by the gamma and epsilon chains, while a peripheral stalk is formed by the delta and b chains.

The protein localises to the cell membrane. Its function is as follows. F(1)F(0) ATP synthase produces ATP from ADP in the presence of a proton or sodium gradient. F-type ATPases consist of two structural domains, F(1) containing the extramembraneous catalytic core and F(0) containing the membrane proton channel, linked together by a central stalk and a peripheral stalk. During catalysis, ATP synthesis in the catalytic domain of F(1) is coupled via a rotary mechanism of the central stalk subunits to proton translocation. In terms of biological role, this protein is part of the stalk that links CF(0) to CF(1). It either transmits conformational changes from CF(0) to CF(1) or is implicated in proton conduction. The sequence is that of ATP synthase subunit delta from Anoxybacillus flavithermus (strain DSM 21510 / WK1).